The chain runs to 168 residues: CASP-like protein 4D1 (168 aa).

Residues 1-11 (MAPPPPSLASR) are Cytoplasmic-facing. A helical transmembrane segment spans residues 12–32 (MAALILRILTFIFLIASLVIL). At 33–57 (TTNTATLELDLVEVKVHFKDVYAYR) the chain is on the extracellular side. The helical transmembrane segment at 58–78 (YMLATIVIGLAYTVLQIAFTL) threads the bilayer. The Cytoplasmic segment spans residues 79-97 (YYVATGNRMMSGDGNLAFD). The helical transmembrane segment at 98 to 118 (FFGDKVISYILVTGAAAGFAS) threads the bilayer. At 119 to 144 (TKDIKPVFSGSGDFDAFINKGYASAS) the chain is on the extracellular side. The helical transmembrane segment at 145-165 (LLLIGFVCTAVLSVFSSYALP) threads the bilayer. Residues 166–168 (KQV) lie on the Cytoplasmic side of the membrane.

The protein belongs to the Casparian strip membrane proteins (CASP) family. Homodimer and heterodimers.

Its subcellular location is the cell membrane. The chain is CASP-like protein 4D1 from Ricinus communis (Castor bean).